The following is a 495-amino-acid chain: ATP synthase subunit beta, chloroplastic (495 aa).

172–179 (GGAGVGKT) serves as a coordination point for ATP.

It belongs to the ATPase alpha/beta chains family. As to quaternary structure, F-type ATPases have 2 components, CF(1) - the catalytic core - and CF(0) - the membrane proton channel. CF(1) has five subunits: alpha(3), beta(3), gamma(1), delta(1), epsilon(1). CF(0) has four main subunits: a(1), b(1), b'(1) and c(9-12).

Its subcellular location is the plastid. It is found in the chloroplast thylakoid membrane. The catalysed reaction is ATP + H2O + 4 H(+)(in) = ADP + phosphate + 5 H(+)(out). Produces ATP from ADP in the presence of a proton gradient across the membrane. The catalytic sites are hosted primarily by the beta subunits. In Pseudogaltonia clavata (Cape hyacinth), this protein is ATP synthase subunit beta, chloroplastic.